Here is an 867-residue protein sequence, read N- to C-terminus: Pentatricopeptide repeat-containing protein At2g39230, mitochondrial (867 aa).

Residues 1-49 (MTTFMVSKRFRPPIFLHRFINPKPISSQTRFLHPPDNQSRDISDSTTET) constitute a mitochondrion transit peptide. The disordered stretch occupies residues 27–74 (SQTRFLHPPDNQSRDISDSTTETISTLEFPHKTSVPNHSPLTSTSETE). Polar residues predominate over residues 60 to 72 (SVPNHSPLTSTSE). PPR repeat units follow at residues 168–202 (TPRAFNYLLNAYIRNKRMDYAVDCFGLMVDRKVVP), 203–237 (FVPYVNNVLSSLVRSNLIDEAKEIYNKMVLIGVAG), 238–272 (DNVTTQLLMRASLRERKPEEAVKIFRRVMSRGAEP), 273–307 (DGLLFSLAVQAACKTPDLVMALDLLREMRGKLGVP), 309–343 (SQETYTSVIVAFVKEGNMEEAVRVMDEMVGFGIPM), 344–378 (SVIAATSLVNGYCKGNELGKALDLFNRMEEEGLAP), 379–413 (DKVMFSVMVEWFCKNMEMEKAIEFYMRMKSVRIAP), 414–444 (SSVLVHTMIQGCLKAESPEAALEIFNDSFES), 448–482 (HGFMCNKIFLLFCKQGKVDAATSFLKMMEQKGIEP), 483–517 (NVVFYNNMMLAHCRMKNMDLARSIFSEMLEKGLEP), 518–552 (NNFTYSILIDGFFKNKDEQNAWDVINQMNASNFEA), 553–588 (NEVIYNTIINGLCKVGQTSKAKEMLQNLIKEKRYSM), 589–623 (SCTSYNSIIDGFVKVGDTDSAVETYREMSENGKSP), 624–658 (NVVTFTSLINGFCKSNRMDLALEMTHEMKSMELKL), 659–693 (DLPAYGALIDGFCKKNDMKTAYTLFSELPELGLMP), 694–728 (NVSVYNSLISGFRNLGKMDAAIDLYKKMVNDGISC), 729–763 (DLFTYTTMIDGLLKDGNINLASDLYSELLDLGIVP), 764–798 (DEILHMVLVNGLSKKGQFLKASKMLEEMKKKDVTP), and 799–833 (NVLLYSTVIAGHHREGNLNEAFRLHDEMLEKGIVH).

This sequence belongs to the PPR family. P subfamily. In terms of tissue distribution, expressed in lateral organ junctions and shoot apical meristem (SAM).

Its subcellular location is the mitochondrion. Functionally, involved in lateral organ development and boundary demarcation. This Arabidopsis thaliana (Mouse-ear cress) protein is Pentatricopeptide repeat-containing protein At2g39230, mitochondrial (LOJ).